The primary structure comprises 20 residues: Pregnancy-associated glycoprotein 55h (20 aa).

A glycan (N-linked (GlcNAc...) asparagine) is linked at Asn-4.

The protein belongs to the peptidase A1 family. Highly expressed in the placenta between day 60 and day 100 of gestation.

The protein resides in the secreted. It localises to the extracellular space. In Ovis aries (Sheep), this protein is Pregnancy-associated glycoprotein 55h.